Reading from the N-terminus, the 750-residue chain is Photosystem I P700 chlorophyll a apoprotein A1 (750 aa).

Transmembrane regions (helical) follow at residues 70-93, 156-179, 195-219, 291-309, 346-369, 385-411, 433-455, and 531-549; these read VFSA…FHGA, LYCT…FHYH, LNHH…HVSL, IAHH…GHMY, WHAQ…HHMY, LSLF…IFMV, AIIS…LYIH, and FLVH…LILL. [4Fe-4S] cluster contacts are provided by Cys-573 and Cys-582. A run of 2 helical transmembrane segments spans residues 589–610 and 664–686; these read HVFL…HFSW and LSAY…MFLF. His-675 serves as a coordination point for chlorophyll a'. Residues Met-683 and Tyr-691 each coordinate chlorophyll a. Residue Trp-692 participates in phylloquinone binding. A helical transmembrane segment spans residues 724 to 744; it reads AVGVTHYLLGGIATTWAFFLA.

Belongs to the PsaA/PsaB family. In terms of assembly, the PsaA/B heterodimer binds the P700 chlorophyll special pair and subsequent electron acceptors. PSI consists of a core antenna complex that captures photons, and an electron transfer chain that converts photonic excitation into a charge separation. The eukaryotic PSI reaction center is composed of at least 11 subunits. Requires P700 is a chlorophyll a/chlorophyll a' dimer, A0 is one or more chlorophyll a, A1 is one or both phylloquinones and FX is a shared 4Fe-4S iron-sulfur center. as cofactor.

It localises to the plastid. The protein resides in the chloroplast thylakoid membrane. The catalysed reaction is reduced [plastocyanin] + hnu + oxidized [2Fe-2S]-[ferredoxin] = oxidized [plastocyanin] + reduced [2Fe-2S]-[ferredoxin]. In terms of biological role, psaA and PsaB bind P700, the primary electron donor of photosystem I (PSI), as well as the electron acceptors A0, A1 and FX. PSI is a plastocyanin-ferredoxin oxidoreductase, converting photonic excitation into a charge separation, which transfers an electron from the donor P700 chlorophyll pair to the spectroscopically characterized acceptors A0, A1, FX, FA and FB in turn. Oxidized P700 is reduced on the lumenal side of the thylakoid membrane by plastocyanin. In Calycanthus floridus var. glaucus (Eastern sweetshrub), this protein is Photosystem I P700 chlorophyll a apoprotein A1.